The following is a 295-amino-acid chain: Light-independent protochlorophyllide reductase iron-sulfur ATP-binding protein (295 aa).

Residues 39 to 44 (GIGKST) and Lys-68 contribute to the ATP site. Mg(2+) is bound at residue Ser-43. Cys-124 and Cys-158 together coordinate [4Fe-4S] cluster. Position 209-210 (209-210 (NR)) interacts with ATP.

Belongs to the NifH/BchL/ChlL family. As to quaternary structure, homodimer. Protochlorophyllide reductase is composed of three subunits; ChlL, ChlN and ChlB. It depends on [4Fe-4S] cluster as a cofactor.

The enzyme catalyses chlorophyllide a + oxidized 2[4Fe-4S]-[ferredoxin] + 2 ADP + 2 phosphate = protochlorophyllide a + reduced 2[4Fe-4S]-[ferredoxin] + 2 ATP + 2 H2O. It functions in the pathway porphyrin-containing compound metabolism; chlorophyll biosynthesis (light-independent). Its function is as follows. Component of the dark-operative protochlorophyllide reductase (DPOR) that uses Mg-ATP and reduced ferredoxin to reduce ring D of protochlorophyllide (Pchlide) to form chlorophyllide a (Chlide). This reaction is light-independent. The L component serves as a unique electron donor to the NB-component of the complex, and binds Mg-ATP. The chain is Light-independent protochlorophyllide reductase iron-sulfur ATP-binding protein from Prochlorococcus marinus (strain MIT 9301).